The chain runs to 430 residues: Lipoyl synthase, mitochondrial (430 aa).

A mitochondrion-targeting transit peptide spans 1–37 (MATSAGKLRTLYSAHSSLSSLPPSARPTLQLATLRSY). Over residues 39–55 (TTTPHDSPIGNTSNTPP) the composition is skewed to polar residues. Positions 39-59 (TTTPHDSPIGNTSNTPPTVKR) are disordered. [4Fe-4S] cluster is bound by residues C141, C146, C152, C172, C176, C179, and S387. Residues 155-376 (GSSKSAATAT…KERALEMGFL (222 aa)) enclose the Radical SAM core domain.

It belongs to the radical SAM superfamily. Lipoyl synthase family. [4Fe-4S] cluster is required as a cofactor.

It is found in the mitochondrion. The enzyme catalyses [[Fe-S] cluster scaffold protein carrying a second [4Fe-4S](2+) cluster] + N(6)-octanoyl-L-lysyl-[protein] + 2 oxidized [2Fe-2S]-[ferredoxin] + 2 S-adenosyl-L-methionine + 4 H(+) = [[Fe-S] cluster scaffold protein] + N(6)-[(R)-dihydrolipoyl]-L-lysyl-[protein] + 4 Fe(3+) + 2 hydrogen sulfide + 2 5'-deoxyadenosine + 2 L-methionine + 2 reduced [2Fe-2S]-[ferredoxin]. It functions in the pathway protein modification; protein lipoylation via endogenous pathway; protein N(6)-(lipoyl)lysine from octanoyl-[acyl-carrier-protein]: step 2/2. Functionally, catalyzes the radical-mediated insertion of two sulfur atoms into the C-6 and C-8 positions of the octanoyl moiety bound to the lipoyl domains of lipoate-dependent enzymes, thereby converting the octanoylated domains into lipoylated derivatives. This chain is Lipoyl synthase, mitochondrial, found in Ajellomyces capsulatus (strain H143) (Darling's disease fungus).